We begin with the raw amino-acid sequence, 233 residues long: Orotidine 5'-phosphate decarboxylase (233 aa).

Substrate contacts are provided by residues aspartate 9, lysine 31, 58 to 67 (DLKLHDIPNT), threonine 120, arginine 182, glutamine 191, glycine 211, and arginine 212. The active-site Proton donor is lysine 60.

This sequence belongs to the OMP decarboxylase family. Type 1 subfamily. In terms of assembly, homodimer.

The catalysed reaction is orotidine 5'-phosphate + H(+) = UMP + CO2. It functions in the pathway pyrimidine metabolism; UMP biosynthesis via de novo pathway; UMP from orotate: step 2/2. Catalyzes the decarboxylation of orotidine 5'-monophosphate (OMP) to uridine 5'-monophosphate (UMP). The protein is Orotidine 5'-phosphate decarboxylase of Listeria monocytogenes serovar 1/2a (strain ATCC BAA-679 / EGD-e).